Consider the following 264-residue polypeptide: Phycocyanobilin:ferredoxin oxidoreductase (264 aa).

It belongs to the HY2 family.

It catalyses the reaction (2R,3Z)-phycocyanobilin + 4 oxidized [2Fe-2S]-[ferredoxin] = biliverdin IXalpha + 4 reduced [2Fe-2S]-[ferredoxin] + 4 H(+). In terms of biological role, catalyzes the four-electron reduction of biliverdin IX-alpha (2-electron reduction at both the A and D rings); the reaction proceeds via an isolatable 2-electron intermediate, 181,182-dihydrobiliverdin. In Prochlorococcus marinus (strain MIT 9313), this protein is Phycocyanobilin:ferredoxin oxidoreductase (pcyA).